A 440-amino-acid chain; its full sequence is Thymidine phosphorylase (440 aa).

This sequence belongs to the thymidine/pyrimidine-nucleoside phosphorylase family. In terms of assembly, homodimer.

It carries out the reaction thymidine + phosphate = 2-deoxy-alpha-D-ribose 1-phosphate + thymine. It functions in the pathway pyrimidine metabolism; dTMP biosynthesis via salvage pathway; dTMP from thymine: step 1/2. In terms of biological role, the enzymes which catalyze the reversible phosphorolysis of pyrimidine nucleosides are involved in the degradation of these compounds and in their utilization as carbon and energy sources, or in the rescue of pyrimidine bases for nucleotide synthesis. In Salmonella paratyphi A (strain ATCC 9150 / SARB42), this protein is Thymidine phosphorylase.